A 334-amino-acid chain; its full sequence is Succinylglutamate desuccinylase (334 aa).

Residues histidine 59, glutamate 62, and histidine 151 each coordinate Zn(2+). Glutamate 215 is an active-site residue.

This sequence belongs to the AspA/AstE family. Succinylglutamate desuccinylase subfamily. Zn(2+) serves as cofactor.

It carries out the reaction N-succinyl-L-glutamate + H2O = L-glutamate + succinate. The protein operates within amino-acid degradation; L-arginine degradation via AST pathway; L-glutamate and succinate from L-arginine: step 5/5. Its function is as follows. Transforms N(2)-succinylglutamate into succinate and glutamate. This chain is Succinylglutamate desuccinylase, found in Pseudomonas fluorescens (strain SBW25).